The sequence spans 454 residues: Methylenetetrahydrofolate--tRNA-(uracil-5-)-methyltransferase TrmFO (454 aa).

An FAD-binding site is contributed by 9-14; it reads GAGLAG. Residues 432–454 form a disordered region; it reads LERVSPPSRETGEPTGAEQVDLA.

The protein belongs to the MnmG family. TrmFO subfamily. FAD is required as a cofactor.

The protein resides in the cytoplasm. The catalysed reaction is uridine(54) in tRNA + (6R)-5,10-methylene-5,6,7,8-tetrahydrofolate + NADH + H(+) = 5-methyluridine(54) in tRNA + (6S)-5,6,7,8-tetrahydrofolate + NAD(+). It catalyses the reaction uridine(54) in tRNA + (6R)-5,10-methylene-5,6,7,8-tetrahydrofolate + NADPH + H(+) = 5-methyluridine(54) in tRNA + (6S)-5,6,7,8-tetrahydrofolate + NADP(+). Functionally, catalyzes the folate-dependent formation of 5-methyl-uridine at position 54 (M-5-U54) in all tRNAs. This Pelobacter propionicus (strain DSM 2379 / NBRC 103807 / OttBd1) protein is Methylenetetrahydrofolate--tRNA-(uracil-5-)-methyltransferase TrmFO.